The following is a 111-amino-acid chain: Iron-sulfur cluster insertion protein ErpA (111 aa).

Residues Cys-39, Cys-103, and Cys-105 each coordinate iron-sulfur cluster.

This sequence belongs to the HesB/IscA family. In terms of assembly, homodimer. The cofactor is iron-sulfur cluster.

Its function is as follows. Required for insertion of 4Fe-4S clusters for at least IspG. The chain is Iron-sulfur cluster insertion protein ErpA from Buchnera aphidicola subsp. Cinara cedri (strain Cc).